The sequence spans 485 residues: Glutamate--tRNA ligase (485 aa).

The 'HIGH' region motif lies at 11-21; that stretch reads PSPTGYMHVGN. The Zn(2+) site is built by cysteine 108, cysteine 110, cysteine 135, and aspartate 137. The 'KMSKS' region signature appears at 252-256; the sequence is KLSKR. Residue lysine 255 participates in ATP binding.

The protein belongs to the class-I aminoacyl-tRNA synthetase family. Glutamate--tRNA ligase type 1 subfamily. In terms of assembly, monomer. Zn(2+) is required as a cofactor.

It localises to the cytoplasm. It carries out the reaction tRNA(Glu) + L-glutamate + ATP = L-glutamyl-tRNA(Glu) + AMP + diphosphate. In terms of biological role, catalyzes the attachment of glutamate to tRNA(Glu) in a two-step reaction: glutamate is first activated by ATP to form Glu-AMP and then transferred to the acceptor end of tRNA(Glu). This Clostridium botulinum (strain Okra / Type B1) protein is Glutamate--tRNA ligase.